A 432-amino-acid chain; its full sequence is Mannan endo-1,4-beta-mannosidase 1 (432 aa).

Positions 1–28 are cleaved as a signal peptide; the sequence is MRLLGAHRAALLVLACVVVVVIHGLGEA. Residues Trp93 and Asn209 each contribute to the substrate site. Glu210 (proton donor) is an active-site residue. Tyr289 is a binding site for substrate. Catalysis depends on Glu329, which acts as the Nucleophile. Position 371 (Trp371) interacts with substrate.

Belongs to the glycosyl hydrolase 5 (cellulase A) family. As to expression, ubiquitous.

It is found in the secreted. It catalyses the reaction Random hydrolysis of (1-&gt;4)-beta-D-mannosidic linkages in mannans, galactomannans and glucomannans.. This is Mannan endo-1,4-beta-mannosidase 1 (MAN1) from Oryza sativa subsp. japonica (Rice).